The sequence spans 316 residues: Ferrochelatase (316 aa).

The Fe cation site is built by H186 and E268.

The protein belongs to the ferrochelatase family.

The protein localises to the cytoplasm. It catalyses the reaction heme b + 2 H(+) = protoporphyrin IX + Fe(2+). It participates in porphyrin-containing compound metabolism; protoheme biosynthesis; protoheme from protoporphyrin-IX: step 1/1. Its function is as follows. Catalyzes the ferrous insertion into protoporphyrin IX. This chain is Ferrochelatase, found in Deinococcus radiodurans (strain ATCC 13939 / DSM 20539 / JCM 16871 / CCUG 27074 / LMG 4051 / NBRC 15346 / NCIMB 9279 / VKM B-1422 / R1).